The primary structure comprises 682 residues: Potassium-transporting ATPase ATP-binding subunit (682 aa).

A run of 4 helical transmembrane segments spans residues 34–54, 62–82, 219–239, and 254–274; these read PVMF…IAMA, ALFS…ANFA, IALT…TATL, and VLVA…LSAI. The active-site 4-aspartylphosphate intermediate is the Asp307. Residues Asp344, Glu348, 377-384, and Lys395 each bind ATP; that span reads FTAQSRMS. 2 residues coordinate Mg(2+): Asp518 and Asp522. 3 consecutive transmembrane segments (helical) span residues 588-608, 616-636, and 656-676; these read FAII…LNIM, AILS…PLAL, and IYGL…DLLL.

This sequence belongs to the cation transport ATPase (P-type) (TC 3.A.3) family. Type IA subfamily. In terms of assembly, the system is composed of three essential subunits: KdpA, KdpB and KdpC.

The protein localises to the cell inner membrane. The catalysed reaction is K(+)(out) + ATP + H2O = K(+)(in) + ADP + phosphate + H(+). Part of the high-affinity ATP-driven potassium transport (or Kdp) system, which catalyzes the hydrolysis of ATP coupled with the electrogenic transport of potassium into the cytoplasm. This subunit is responsible for energy coupling to the transport system and for the release of the potassium ions to the cytoplasm. The polypeptide is Potassium-transporting ATPase ATP-binding subunit (Escherichia coli O139:H28 (strain E24377A / ETEC)).